Reading from the N-terminus, the 155-residue chain is UPF0266 membrane protein lin0773 (155 aa).

Transmembrane regions (helical) follow at residues 8-28, 46-66, and 70-90; these read IFLF…DAVI, RWDG…NTFF, and PFST…ICFF.

It belongs to the UPF0266 family.

The protein localises to the cell membrane. This chain is UPF0266 membrane protein lin0773, found in Listeria innocua serovar 6a (strain ATCC BAA-680 / CLIP 11262).